The sequence spans 427 residues: 3-phosphoshikimate 1-carboxyvinyltransferase (427 aa).

Residues lysine 20, serine 21, and arginine 25 each coordinate 3-phosphoshikimate. Lysine 20 is a binding site for phosphoenolpyruvate. 2 residues coordinate phosphoenolpyruvate: glycine 92 and arginine 120. Residues serine 166, glutamine 168, aspartate 312, and lysine 339 each coordinate 3-phosphoshikimate. Glutamine 168 lines the phosphoenolpyruvate pocket. The active-site Proton acceptor is aspartate 312. 2 residues coordinate phosphoenolpyruvate: arginine 343 and arginine 385.

This sequence belongs to the EPSP synthase family. Monomer.

The protein resides in the cytoplasm. The catalysed reaction is 3-phosphoshikimate + phosphoenolpyruvate = 5-O-(1-carboxyvinyl)-3-phosphoshikimate + phosphate. It functions in the pathway metabolic intermediate biosynthesis; chorismate biosynthesis; chorismate from D-erythrose 4-phosphate and phosphoenolpyruvate: step 6/7. Its function is as follows. Catalyzes the transfer of the enolpyruvyl moiety of phosphoenolpyruvate (PEP) to the 5-hydroxyl of shikimate-3-phosphate (S3P) to produce enolpyruvyl shikimate-3-phosphate and inorganic phosphate. The polypeptide is 3-phosphoshikimate 1-carboxyvinyltransferase (Streptococcus thermophilus (strain CNRZ 1066)).